Consider the following 1277-residue polypeptide: NPC intracellular cholesterol transporter 1 (1277 aa).

The signal sequence occupies residues 1–22; that stretch reads MSARGPAFGLLLLLLCPVQVFS. Topologically, residues 23-269 are lumenal; that stretch reads QSCVWYGECG…WRILGLDAMY (247 aa). 9 cysteine pairs are disulfide-bonded: cysteine 25/cysteine 74, cysteine 31/cysteine 42, cysteine 63/cysteine 109, cysteine 75/cysteine 113, cysteine 97/cysteine 238, cysteine 100/cysteine 160, cysteine 177/cysteine 184, cysteine 227/cysteine 243, and cysteine 240/cysteine 247. Asparagine 41 provides a ligand contact to cholesterol. Asparagine 70 carries an N-linked (GlcNAc...) asparagine glycan. A cholesterol-binding site is contributed by glutamine 79. Asparagine 122 and asparagine 135 each carry an N-linked (GlcNAc...) asparagine glycan. The interval 175-205 is important for cholesterol binding and cholesterol transfer from NPC1 to liposomes; the sequence is LLCGREAQACNATNWIEYMFNKDNGQAPFTI. N-linked (GlcNAc...) asparagine glycosylation is found at asparagine 185 and asparagine 222. Residues 270–290 traverse the membrane as a helical segment; that stretch reads VIMWSSYMAFLIVFFGAFFAV. At 291–350 the chain is on the cytoplasmic side; that stretch reads WCYRKRYFVSEYTPIDGNIAFSVNSSDKGQAFCCDPLGAAFERGLRRLFAQWGAFCVRHP. Residues 351 to 371 traverse the membrane as a helical segment; the sequence is GCVVFFSLAFIVACSSGLVFI. Residues 372–621 are Lumenal-facing; that stretch reads RVTTDPVDLW…ELNRESNSDL (250 aa). N-linked (GlcNAc...) asparagine glycosylation is found at asparagine 415, asparagine 452, asparagine 459, and asparagine 478. 2 cysteine pairs are disulfide-bonded: cysteine 468–cysteine 479 and cysteine 516–cysteine 533. The 166-residue stretch at 620 to 785 folds into the SSD domain; it reads DLFTILISYA…ITCFVSLLGL (166 aa). The chain crosses the membrane as a helical span at residues 622–642; it reads FTILISYAIMFLYISIALGHI. Residues 643 to 653 lie on the Cytoplasmic side of the membrane; that stretch reads KSCSRLLVDSK. A helical transmembrane segment spans residues 654–674; the sequence is ISLGIAGILIVLSSVACSLGI. The Lumenal segment spans residues 675–677; it reads FSY. The chain crosses the membrane as a helical span at residues 678 to 698; sequence IGVPLTLIVIEVIPFLVLAVG. The Cytoplasmic portion of the chain corresponds to 699-734; that stretch reads VDNIFILVQTYQRDERLQGETLDQQLGRVLGEVAPS. A helical membrane pass occupies residues 735 to 755; sequence MFLSSFSETVAFFLGGLSVVP. Topologically, residues 756–759 are lumenal; sequence AVHT. Residues 760 to 780 traverse the membrane as a helical segment; sequence FSLFAGMAVLIDFLLQITCFV. At 781–832 the chain is on the cytoplasmic side; that stretch reads SLLGLDIKRQEKNRLDVVCCVQGAEDGAGVQASESCLFRFFKNSYAPLLLKD. The chain crosses the membrane as a helical span at residues 833–853; sequence WMRPIVIAVFVGVLSFSIAVL. Topologically, residues 854–1097 are lumenal; it reads NKVEIGLDQS…EQYLTVIDDT (244 aa). An N-linked (GlcNAc...) asparagine glycan is attached at asparagine 898. Cysteines 909 and 914 form a disulfide. Residues asparagine 916, asparagine 931, asparagine 961, asparagine 968, asparagine 1028, and asparagine 1063 are each glycosylated (N-linked (GlcNAc...) asparagine). Cystine bridges form between cysteine 956–cysteine 1011, cysteine 957–cysteine 979, and cysteine 967–cysteine 976. A helical membrane pass occupies residues 1098–1118; that stretch reads IFNLGVSLGAIFLVTVVLMGC. The Cytoplasmic segment spans residues 1119-1123; that stretch reads ELWAT. Residues 1124–1144 traverse the membrane as a helical segment; it reads VIMCVTIAMILVNMFGVMWLW. A topological domain (lumenal) is located at residue glycine 1145. The chain crosses the membrane as a helical span at residues 1146 to 1166; that stretch reads ISLNAVSLVNLVMSCGISVEF. Topologically, residues 1167 to 1194 are cytoplasmic; it reads CSHITRAFTLSTKGSRVDRAEEALAHMG. Residues 1195–1215 form a helical membrane-spanning segment; the sequence is SSVFSGITLTKFGGIVVLAFA. Residues 1216–1226 lie on the Lumenal side of the membrane; it reads KSQIFQIFYFR. Residues 1227–1247 traverse the membrane as a helical segment; that stretch reads MYLAIVLLGATHGLIFLPVLL. Residues 1248–1277 are Cytoplasmic-facing; the sequence is SYIGPSINKAKSLATQERYKGTEREQLLNF. A required for location in lysosomes region spans residues 1274–1277; sequence LLNF. The short motif at 1274–1277 is the Di-leucine motif element; it reads LLNF.

Belongs to the patched family. As to quaternary structure, interacts (via the second lumenal domain) with NPC2. Interacts with TMEM97; the interaction may decrease NPC1 availability to the cell. Interacts with TIM1. Interacts with SLC38A9; this interaction inhibits cholesterol-mediated mTORC1 activation via its sterol transport activity. In terms of processing, N-glycosylated. As to expression, detected in corpus luteum, granulosa cells and adrenal gland.

Its subcellular location is the late endosome membrane. The protein localises to the lysosome membrane. The enzyme catalyses cholesterol(in) = cholesterol(out). Its function is as follows. Intracellular cholesterol transporter which acts in concert with NPC2 and plays an important role in the egress of cholesterol from the endosomal/lysosomal compartment. Unesterified cholesterol that has been released from LDLs in the lumen of the late endosomes/lysosomes is transferred by NPC2 to the cholesterol-binding pocket in the N-terminal domain of NPC1. Cholesterol binds to NPC1 with the hydroxyl group buried in the binding pocket. Binds oxysterol with higher affinity than cholesterol. May play a role in vesicular trafficking in glia, a process that may be crucial for maintaining the structural and functional integrity of nerve terminals. Inhibits cholesterol-mediated mTORC1 activation throught its interaction with SLC38A9. The chain is NPC intracellular cholesterol transporter 1 from Sus scrofa (Pig).